The sequence spans 535 residues: UDP-glycosyltransferase stmC (535 aa).

2 N-linked (GlcNAc...) asparagine glycosylation sites follow: Asn70 and Asn422. A helical transmembrane segment spans residues 506–526 (ASNLDLYIVCIAFVAVPVGVA).

This sequence belongs to the glycosyltransferase 28 family.

Its subcellular location is the membrane. The enzyme catalyses stromemycin aglycone + UDP-alpha-D-glucose = stromemycin + UDP + H(+). It carries out the reaction exophillate aglycone + UDP-alpha-D-glucose = exophillate + UDP + H(+). The protein operates within mycotoxin biosynthesis. Functionally, UDP-glycosyltransferase; part of the gene cluster that mediates the biosynthesis of stromemycin, a depside C-glucoside with two unsaturated C9 side chains belonging to aromatic polyketide glycosides. Acts as the tailoring enzyme responsible for 3-C-glucosylation of bininalkenylresorcylic acid produced by the combined action of the HR-PKS stmA and the NR-PKS stmB to yield stromemycin. Possesses a relatively strict acceptor specificity towards bininalkenylresorcylic acid for C-glycosylation, but is able to use several donors including UDP-alpha-D-galactose, UDP-alpha-D-xylose, UDP-alpha-D-4-keto-6-deoxyglucose, UDP-alpha-D-quinovose, and UDP-beta-L-rhamnose. This Aspergillus ustus protein is UDP-glycosyltransferase stmC.